We begin with the raw amino-acid sequence, 399 residues long: Argininosuccinate synthase (399 aa).

A8–S16 is a binding site for ATP. Residue Y87 coordinates L-citrulline. Residue G117 participates in ATP binding. The L-aspartate site is built by T119, N123, and D124. Position 123 (N123) interacts with L-citrulline. Positions 127, 175, 260, and 272 each coordinate L-citrulline.

It belongs to the argininosuccinate synthase family. Type 1 subfamily. In terms of assembly, homotetramer.

The protein localises to the cytoplasm. The enzyme catalyses L-citrulline + L-aspartate + ATP = 2-(N(omega)-L-arginino)succinate + AMP + diphosphate + H(+). The protein operates within amino-acid biosynthesis; L-arginine biosynthesis; L-arginine from L-ornithine and carbamoyl phosphate: step 2/3. The chain is Argininosuccinate synthase from Rhodococcus jostii (strain RHA1).